A 217-amino-acid polypeptide reads, in one-letter code: Protein-methionine-sulfoxide reductase heme-binding subunit MsrQ (217 aa).

Helical transmembrane passes span 82–102, 118–138, 150–170, and 180–200; these read MLGL…LLVD, PFIT…ATST, WQWL…HYWW, and EVSI…WWVW.

Belongs to the MsrQ family. In terms of assembly, heterodimer of a catalytic subunit (MsrP) and a heme-binding subunit (MsrQ). FMN serves as cofactor. Heme b is required as a cofactor.

It localises to the cell inner membrane. In terms of biological role, part of the MsrPQ system that repairs oxidized periplasmic proteins containing methionine sulfoxide residues (Met-O), using respiratory chain electrons. Thus protects these proteins from oxidative-stress damage caused by reactive species of oxygen and chlorine generated by the host defense mechanisms. MsrPQ is essential for the maintenance of envelope integrity under bleach stress, rescuing a wide series of structurally unrelated periplasmic proteins from methionine oxidation. MsrQ provides electrons for reduction to the reductase catalytic subunit MsrP, using the quinone pool of the respiratory chain. This is Protein-methionine-sulfoxide reductase heme-binding subunit MsrQ from Ralstonia nicotianae (strain ATCC BAA-1114 / GMI1000) (Ralstonia solanacearum).